The primary structure comprises 130 residues: Small ribosomal subunit protein uS11 (130 aa).

It belongs to the universal ribosomal protein uS11 family. Part of the 30S ribosomal subunit. Interacts with proteins S7 and S18. Binds to IF-3.

In terms of biological role, located on the platform of the 30S subunit, it bridges several disparate RNA helices of the 16S rRNA. Forms part of the Shine-Dalgarno cleft in the 70S ribosome. In Campylobacter curvus (strain 525.92), this protein is Small ribosomal subunit protein uS11.